The primary structure comprises 148 residues: Protein TIFY 5B (148 aa).

In terms of domain architecture, Tify spans 54 to 89; sequence PKQESQILTIFYNGHMCVSSDLTHLEANAILSLASR.

This sequence belongs to the TIFY/JAZ family. In terms of processing, ubiquitinated. Targeted for degradation by the SCF(COI1) E3 ubiquitin ligase-proteasome pathway during jasmonate signaling.

The protein resides in the nucleus. Functionally, repressor of jasmonate responses. The sequence is that of Protein TIFY 5B (TIFY 5B) from Arabidopsis thaliana (Mouse-ear cress).